Here is a 151-residue protein sequence, read N- to C-terminus: Deoxyuridine 5'-triphosphate nucleotidohydrolase (151 aa).

Residues 70–72 (RSG), Asn83, 87–89 (LID), and Met97 contribute to the substrate site.

It belongs to the dUTPase family. Homotrimer. Requires Mg(2+) as cofactor.

The catalysed reaction is dUTP + H2O = dUMP + diphosphate + H(+). The protein operates within pyrimidine metabolism; dUMP biosynthesis; dUMP from dCTP (dUTP route): step 2/2. Functionally, this enzyme is involved in nucleotide metabolism: it produces dUMP, the immediate precursor of thymidine nucleotides and it decreases the intracellular concentration of dUTP so that uracil cannot be incorporated into DNA. The polypeptide is Deoxyuridine 5'-triphosphate nucleotidohydrolase (Escherichia coli O7:K1 (strain IAI39 / ExPEC)).